The sequence spans 322 residues: Probable cell division protein WhiA (322 aa).

The H-T-H motif DNA-binding region spans 279 to 312 (SLKELGELWTPPVGKSGVNHRIRKIERLAEKLRS).

Belongs to the WhiA family.

Involved in cell division and chromosome segregation. This chain is Probable cell division protein WhiA, found in Desulforamulus reducens (strain ATCC BAA-1160 / DSM 100696 / MI-1) (Desulfotomaculum reducens).